Reading from the N-terminus, the 155-residue chain is Ribosome maturation factor RimP (155 aa).

Belongs to the RimP family.

The protein resides in the cytoplasm. Required for maturation of 30S ribosomal subunits. The chain is Ribosome maturation factor RimP from Prochlorococcus marinus (strain MIT 9515).